Reading from the N-terminus, the 112-residue chain is Late expression factor 11 (112 aa).

It belongs to the baculoviridae LEF-11 family.

In terms of biological role, involved in late/very late gene activation. The protein is Late expression factor 11 (LEF-11) of Helicoverpa zea (Corn earworm moth).